Reading from the N-terminus, the 600-residue chain is Probable methyltransferase PMT7 (600 aa).

At 1–15 (MGGGYVLFGSARSGQ) the chain is on the cytoplasmic side. The chain crosses the membrane as a helical; Signal-anchor for type II membrane protein span at residues 16 to 36 (MIMVALVLMVGSFYAGSIFGN). Over 37-600 (NSPIYISQPS…FCRKKFWAIL (564 aa)) the chain is Lumenal. 9 N-linked (GlcNAc...) asparagine glycosylation sites follow: asparagine 49, asparagine 98, asparagine 110, asparagine 157, asparagine 200, asparagine 204, asparagine 334, asparagine 447, and asparagine 484.

It belongs to the methyltransferase superfamily.

The protein localises to the golgi apparatus membrane. The polypeptide is Probable methyltransferase PMT7 (Arabidopsis thaliana (Mouse-ear cress)).